We begin with the raw amino-acid sequence, 257 residues long: BTB/POZ domain-containing protein KCTD1 (257 aa).

The disordered stretch occupies residues 1–25 (MSRPLITRSPASPLNNQGIPTPAQL). Phosphoserine occurs at positions 9 and 12. Residues 9–25 (SPASPLNNQGIPTPAQL) are compositionally biased toward polar residues. In terms of domain architecture, BTB spans 30–100 (APVHIDVGGH…LRTSKLLIPD (71 aa)).

In terms of assembly, forms homopentamers. Interacts with KCTD15, probably forming heteropentamers depending on its abundance in a cell-type dependent manner. Interacts with TFAP2A, TFAP2B and TFAP2C via the BTB domain. In terms of processing, sumoylated. In terms of tissue distribution, expressed in mammary gland, kidney, brain and ovary.

Its subcellular location is the nucleus. In terms of biological role, may repress the transcriptional activity of AP-2 family members, including TFAP2A, TFAP2B and TFAP2C to various extent. This is BTB/POZ domain-containing protein KCTD1 (KCTD1) from Homo sapiens (Human).